We begin with the raw amino-acid sequence, 194 residues long: Ribonuclease HII (194 aa).

One can recognise an RNase H type-2 domain in the interval 3-193 (ILTAGVDEAG…VRNLFAQQAL (191 aa)). 3 residues coordinate a divalent metal cation: aspartate 9, glutamate 10, and aspartate 101.

Belongs to the RNase HII family. The cofactor is Mn(2+). It depends on Mg(2+) as a cofactor.

Its subcellular location is the cytoplasm. It catalyses the reaction Endonucleolytic cleavage to 5'-phosphomonoester.. In terms of biological role, endonuclease that specifically degrades the RNA of RNA-DNA hybrids. The polypeptide is Ribonuclease HII (Neisseria meningitidis serogroup C / serotype 2a (strain ATCC 700532 / DSM 15464 / FAM18)).